We begin with the raw amino-acid sequence, 1209 residues long: DNA-directed RNA polymerase subunit beta'' (1209 aa).

4 residues coordinate Zn(2+): cysteine 233, cysteine 308, cysteine 315, and cysteine 318.

Belongs to the RNA polymerase beta' chain family. RpoC2 subfamily. In plastids the minimal PEP RNA polymerase catalytic core is composed of four subunits: alpha, beta, beta', and beta''. When a (nuclear-encoded) sigma factor is associated with the core the holoenzyme is formed, which can initiate transcription. The cofactor is Zn(2+).

Its subcellular location is the plastid. It localises to the chloroplast. It carries out the reaction RNA(n) + a ribonucleoside 5'-triphosphate = RNA(n+1) + diphosphate. Functionally, DNA-dependent RNA polymerase catalyzes the transcription of DNA into RNA using the four ribonucleoside triphosphates as substrates. The chain is DNA-directed RNA polymerase subunit beta'' from Pinus koraiensis (Korean pine).